Reading from the N-terminus, the 329-residue chain is MAISWKEMNELQPRVMKLLYNSIEKDRLSHAYLFEGKKGTGKLDAALLLAKSFFCLEGGAEPCESCRNCKRIESGNHPDLHLVQPDGLSIKKAQIQALQEEFSKTGLESHKKLYIISHADQMTANAANSLLKFLEEPNKDTMAVLITEQPQRLLDTIISRCQTLPFQPLQPKAIEDRLIEQDVSPHMARLLANMTNNVAEAVELSRNDEFAESRAKVIKLYEVLHQRKGHAFFFIQDQWMPFFKEKTHQEMGLDMLLLIYRDVLSIQIGNEDKLIYQDLFQSIKQHALQSTQQSVTNQILAVLEAKKRLHSNVNVQGLMEHLVLMLQEG.

As to quaternary structure, component of the DNA clamp loading complex consisting of tau(3):delta(1):delta'(1). The DNA polymerase III holoenzyme complex contains at least 10 different subunits organized into 3 functionally essential subassemblies: the Pol III core, the beta sliding clamp processivity factor and the clamp-loading complex. The Pol III core (subunits alpha, epsilon and theta) contains the polymerase and the 3'-5' exonuclease proofreading activities. The polymerase is tethered to the template via the dimeric beta sliding clamp processivity factor. The DNA clamp-loading complex assembles the beta sliding clamp onto the primed template and plays a central role in the organization and communication at the replication fork.

The protein resides in the cytoplasm. Its subcellular location is the nucleoid. The enzyme catalyses DNA(n) + a 2'-deoxyribonucleoside 5'-triphosphate = DNA(n+1) + diphosphate. DNA polymerase III is a complex, multichain enzyme responsible for most of the replicative synthesis in bacteria. In Bacillus subtilis (strain 168), this protein is DNA polymerase III subunit delta' (holB).